Consider the following 474-residue polypeptide: 3-isopropylmalate dehydratase large subunit (474 aa).

[4Fe-4S] cluster contacts are provided by C355, C415, and C418.

This sequence belongs to the aconitase/IPM isomerase family. LeuC type 1 subfamily. Heterodimer of LeuC and LeuD. [4Fe-4S] cluster serves as cofactor.

The enzyme catalyses (2R,3S)-3-isopropylmalate = (2S)-2-isopropylmalate. Its pathway is amino-acid biosynthesis; L-leucine biosynthesis; L-leucine from 3-methyl-2-oxobutanoate: step 2/4. In terms of biological role, catalyzes the isomerization between 2-isopropylmalate and 3-isopropylmalate, via the formation of 2-isopropylmaleate. This is 3-isopropylmalate dehydratase large subunit from Shewanella sp. (strain MR-4).